The chain runs to 381 residues: Pectin lyase 1 (381 aa).

The first 20 residues, 1-20, serve as a signal peptide directing secretion; it reads MKYASFIAAAAAALASAVSA. Intrachain disulfides connect cysteine 83–cysteine 102 and cysteine 92–cysteine 227. N-linked (GlcNAc...) asparagine glycosylation occurs at asparagine 130. The active site involves arginine 257. Cysteine 324 and cysteine 332 are disulfide-bonded.

The protein belongs to the polysaccharide lyase 1 family.

It is found in the secreted. It catalyses the reaction Eliminative cleavage of (1-&gt;4)-alpha-D-galacturonan methyl ester to give oligosaccharides with 4-deoxy-6-O-methyl-alpha-D-galact-4-enuronosyl groups at their non-reducing ends.. Pectinolytic enzymes consist of four classes of enzymes: pectin lyase, polygalacturonase, pectin methylesterase and rhamnogalacturonase. Among pectinolytic enzymes, pectin lyase is the most important in depolymerization of pectin, since it cleaves internal glycosidic bonds of highly methylated pectins. The protein is Pectin lyase 1 (pel1) of Aspergillus oryzae (strain ATCC 42149 / RIB 40) (Yellow koji mold).